A 182-amino-acid polypeptide reads, in one-letter code: ATP synthase subunit delta (182 aa).

Belongs to the ATPase delta chain family. In terms of assembly, F-type ATPases have 2 components, F(1) - the catalytic core - and F(0) - the membrane proton channel. F(1) has five subunits: alpha(3), beta(3), gamma(1), delta(1), epsilon(1). CF(0) has four main subunits: a(1), b(1), b'(1) and c(10-14). The alpha and beta chains form an alternating ring which encloses part of the gamma chain. F(1) is attached to F(0) by a central stalk formed by the gamma and epsilon chains, while a peripheral stalk is formed by the delta, b and b' chains.

It is found in the cellular thylakoid membrane. Functionally, f(1)F(0) ATP synthase produces ATP from ADP in the presence of a proton or sodium gradient. F-type ATPases consist of two structural domains, F(1) containing the extramembraneous catalytic core and F(0) containing the membrane proton channel, linked together by a central stalk and a peripheral stalk. During catalysis, ATP synthesis in the catalytic domain of F(1) is coupled via a rotary mechanism of the central stalk subunits to proton translocation. This protein is part of the stalk that links CF(0) to CF(1). It either transmits conformational changes from CF(0) to CF(1) or is implicated in proton conduction. The chain is ATP synthase subunit delta from Synechococcus sp. (strain WH7803).